Consider the following 317-residue polypeptide: UV DNA damage endonuclease (317 aa).

Belongs to the uve1/UvsE family.

Its function is as follows. Component in a DNA repair pathway. Removal of UV LIGHT damaged nucleotides. Recognizes pyrimidine dimers and cleave a phosphodiester bond immediately 5' to the lesion. The protein is UV DNA damage endonuclease of Bacillus anthracis (strain A0248).